A 185-amino-acid chain; its full sequence is uncharacterized protein (185 aa).

The next 2 membrane-spanning stretches (helical) occupy residues 1–19 (MLNI…TSSA) and 105–125 (AGFI…TMDV).

The protein resides in the membrane. This is an uncharacterized protein from Caenorhabditis elegans.